An 868-amino-acid chain; its full sequence is LPS-assembly protein LptD (868 aa).

Residues 1 to 24 form the signal peptide; that stretch reads MLKGIHKYLLMCFGTVLFTVQANA.

Belongs to the LptD family. As to quaternary structure, component of the lipopolysaccharide transport and assembly complex. Interacts with LptE and LptA.

It is found in the cell outer membrane. Functionally, together with LptE, is involved in the assembly of lipopolysaccharide (LPS) at the surface of the outer membrane. The chain is LPS-assembly protein LptD from Francisella tularensis subsp. holarctica (strain LVS).